The chain runs to 458 residues: A-type ATP synthase subunit B (458 aa).

This sequence belongs to the ATPase alpha/beta chains family. As to quaternary structure, has multiple subunits with at least A(3), B(3), C, D, E, F, H, I and proteolipid K(x).

Its subcellular location is the cell membrane. Its function is as follows. Component of the A-type ATP synthase that produces ATP from ADP in the presence of a proton gradient across the membrane. The B chain is a regulatory subunit. This Methanocella arvoryzae (strain DSM 22066 / NBRC 105507 / MRE50) protein is A-type ATP synthase subunit B.